The following is a 367-amino-acid chain: Aminomethyltransferase (367 aa).

This sequence belongs to the GcvT family. As to quaternary structure, the glycine cleavage system is composed of four proteins: P, T, L and H.

It catalyses the reaction N(6)-[(R)-S(8)-aminomethyldihydrolipoyl]-L-lysyl-[protein] + (6S)-5,6,7,8-tetrahydrofolate = N(6)-[(R)-dihydrolipoyl]-L-lysyl-[protein] + (6R)-5,10-methylene-5,6,7,8-tetrahydrofolate + NH4(+). Functionally, the glycine cleavage system catalyzes the degradation of glycine. The sequence is that of Aminomethyltransferase from Mycolicibacterium paratuberculosis (strain ATCC BAA-968 / K-10) (Mycobacterium paratuberculosis).